Consider the following 191-residue polypeptide: Peptidyl-tRNA hydrolase (191 aa).

Y17 contacts tRNA. The active-site Proton acceptor is the H22. 3 residues coordinate tRNA: Y68, N70, and N116.

It belongs to the PTH family. As to quaternary structure, monomer.

Its subcellular location is the cytoplasm. It catalyses the reaction an N-acyl-L-alpha-aminoacyl-tRNA + H2O = an N-acyl-L-amino acid + a tRNA + H(+). Functionally, hydrolyzes ribosome-free peptidyl-tRNAs (with 1 or more amino acids incorporated), which drop off the ribosome during protein synthesis, or as a result of ribosome stalling. Its function is as follows. Catalyzes the release of premature peptidyl moieties from peptidyl-tRNA molecules trapped in stalled 50S ribosomal subunits, and thus maintains levels of free tRNAs and 50S ribosomes. The chain is Peptidyl-tRNA hydrolase from Francisella tularensis subsp. tularensis (strain FSC 198).